We begin with the raw amino-acid sequence, 564 residues long: Cytochrome c oxidase subunit 1 (564 aa).

The interval 1-23 (MTAVAPRLENYAEPTRPAPTGGA) is disordered. 7 helical membrane-spanning segments follow: residues 43 to 63 (MMYI…ALLI), 83 to 103 (LFTL…VWGF), 122 to 142 (LNAF…AGFL), 171 to 191 (FWII…VNMI), 214 to 234 (IFVA…AALG), 259 to 279 (LFWF…FGIV), and 292 to 312 (FGYI…MAVW). His87 contacts Fe(II)-heme a. Residues His265 and Tyr269 each coordinate Cu cation. A cross-link (1'-histidyl-3'-tyrosine (His-Tyr)) is located at residues 265–269 (HPEVY). Residues His314 and His315 each coordinate Cu cation. The next 2 membrane-spanning stretches (helical) occupy residues 316–336 (MFVT…LISV) and 360–380 (MTWT…GIML). His398 lines the heme a3 pocket. 3 helical membrane-spanning segments follow: residues 399 to 419 (FHYT…YFWF), 434 to 454 (IHFW…HWVG), and 477 to 497 (ISTV…WNVF). Fe(II)-heme a is bound at residue His400.

Belongs to the heme-copper respiratory oxidase family. In terms of assembly, associates with subunits II, III and IV to form cytochrome c oxidase. It depends on Cu(2+) as a cofactor. Heme is required as a cofactor.

The protein resides in the cell membrane. The enzyme catalyses 4 Fe(II)-[cytochrome c] + O2 + 8 H(+)(in) = 4 Fe(III)-[cytochrome c] + 2 H2O + 4 H(+)(out). It participates in energy metabolism; oxidative phosphorylation. Cytochrome c oxidase is the component of the respiratory chain that catalyzes the reduction of oxygen to water. Subunits 1-3 form the functional core of the enzyme complex. CO I is the catalytic subunit of the enzyme. Electrons originating in cytochrome c are transferred via the copper A center of subunit 2 and heme A of subunit 1 to the bimetallic center formed by heme A3 and copper B. In Corynebacterium diphtheriae (strain ATCC 700971 / NCTC 13129 / Biotype gravis), this protein is Cytochrome c oxidase subunit 1 (ctaD).